A 372-amino-acid chain; its full sequence is Alpha-1,3-mannosyl-glycoprotein 4-beta-N-acetylglucosaminyltransferase-like protein MGAT4D (372 aa).

The Cytoplasmic segment spans residues 1 to 8 (MKTKNVNL). Residues 9–29 (LFALVAVLLFGFSCFCISRMN) form a helical; Signal-anchor for type II membrane protein membrane-spanning segment. Residues 30–372 (QTNNQLINCR…REQHLKDHYY (343 aa)) are Lumenal-facing. 2 N-linked (GlcNAc...) asparagine glycosylation sites follow: asparagine 54 and asparagine 143.

This sequence belongs to the glycosyltransferase 54 family. As to quaternary structure, may self-associate; specifically in the endoplasmic reticulum prior to its translocation to the Golgi. Interacts with MGAT1, MGAT3 and MAN2A2; may interact with MGTA1 specifically in the Golgi. In terms of processing, N-glycosylated. O-glycosylated; further modified with terminal sialic acid residues. In terms of tissue distribution, testis.

It is found in the golgi apparatus membrane. The protein resides in the endoplasmic reticulum membrane. In terms of biological role, may play a role in male spermatogenesis. In vitro acts as inhibitor of MGAT1 activity causing cell surface proteins to carry mainly high mannose N-glycans. The function is mediated by its lumenal domain and occurs specifically in the Golgi. A catalytic glucosyltransferase activity is not detected. May be involved in regulation of Sertoli-germ cell interactions during specific stages of spermatogenesis. The chain is Alpha-1,3-mannosyl-glycoprotein 4-beta-N-acetylglucosaminyltransferase-like protein MGAT4D from Rattus norvegicus (Rat).